The sequence spans 92 residues: Ezrin (92 aa).

One can recognise an FERM domain in the interval 1 to 72; sequence QLFDQVVKGF…PDFVFYAPRR (72 aa). Residue Lys-15 is modified to N6-acetyllysine. Positions 42 to 92 are interaction with SCYL3; that stretch reads EIRNISFNDKKFVIKPIDKKAPDFVFYAPRRKPDTIEVQQMKLQDFEQKTK.

In terms of assembly, interacts with PALS1 and NHERF2. Found in a complex with EZR, PODXL and NHERF2. Interacts with MCC, PLEKHG6, PODXL, SCYL3/PACE1, NHERF1 and TMEM8B. Interacts (when phosphorylated) with FES/FPS. Interacts with dimeric S100P, the interaction may be activating through unmasking of F-actin binding sites. Identified in complexes that contain VIM, EZR, AHNAK, BFSP1, BFSP2, ANK2, PLEC, PRX and spectrin. Detected in a complex composed of at least EZR, AHNAK, PPL and PRX. Interacts with PDPN (via cytoplasmic domain); activates RHOA and promotes epithelial-mesenchymal transition. Interacts with SPN/CD43 cytoplasmic tail, CD44 and ICAM2. Interacts with CLIC5; may work together in a complex which also includes RDX and MYO6 to stabilize linkages between the plasma membrane and subjacent actin cytoskeleton at the base of stereocilia. Phosphorylated by tyrosine-protein kinases. Phosphorylation by ROCK2 suppresses the head-to-tail association of the N-terminal and C-terminal halves resulting in an opened conformation which is capable of actin and membrane-binding. Post-translationally, S-nitrosylation is induced by interferon-gamma and oxidatively-modified low-densitity lipoprotein (LDL(ox)) possibly implicating the iNOS-S100A8/9 transnitrosylase complex.

The protein localises to the apical cell membrane. It is found in the cell projection. Its subcellular location is the microvillus membrane. The protein resides in the ruffle membrane. It localises to the cytoplasm. The protein localises to the cell cortex. It is found in the cytoskeleton. Its subcellular location is the microvillus. Its activity is regulated as follows. A head-to-tail association, of the N-terminal and C-terminal halves results in a closed conformation (inactive form) which is incapable of actin or membrane-binding. Functionally, probably involved in connections of major cytoskeletal structures to the plasma membrane. In epithelial cells, required for the formation of microvilli and membrane ruffles on the apical pole. Along with PLEKHG6, required for normal macropinocytosis. The chain is Ezrin from Mesocricetus auratus (Golden hamster).